Consider the following 390-residue polypeptide: Elongation factor Ts, mitochondrial (390 aa).

This sequence belongs to the EF-Ts family.

Its subcellular location is the mitochondrion. In terms of biological role, associates with the EF-Tu.GDP complex and induces the exchange of GDP to GTP. It remains bound to the aminoacyl-tRNA.EF-Tu.GTP complex up to the GTP hydrolysis stage on the ribosome. In Plasmodium falciparum (isolate 3D7), this protein is Elongation factor Ts, mitochondrial.